A 151-amino-acid chain; its full sequence is Phosphoribosyl-AMP cyclohydrolase (151 aa).

Over residues 1–13 (MMTLTFASPPQNK) the composition is skewed to polar residues. The interval 1–20 (MMTLTFASPPQNKSDLETGP) is disordered. Residue D93 participates in Mg(2+) binding. C94 contributes to the Zn(2+) binding site. Positions 95 and 97 each coordinate Mg(2+). Zn(2+) contacts are provided by C112 and C119.

Belongs to the PRA-CH family. Homodimer. It depends on Mg(2+) as a cofactor. The cofactor is Zn(2+).

Its subcellular location is the cytoplasm. It carries out the reaction 1-(5-phospho-beta-D-ribosyl)-5'-AMP + H2O = 1-(5-phospho-beta-D-ribosyl)-5-[(5-phospho-beta-D-ribosylamino)methylideneamino]imidazole-4-carboxamide. It participates in amino-acid biosynthesis; L-histidine biosynthesis; L-histidine from 5-phospho-alpha-D-ribose 1-diphosphate: step 3/9. Functionally, catalyzes the hydrolysis of the adenine ring of phosphoribosyl-AMP. The protein is Phosphoribosyl-AMP cyclohydrolase of Sinorhizobium medicae (strain WSM419) (Ensifer medicae).